The primary structure comprises 377 residues: CaM kinase-like vesicle-associated protein (377 aa).

Residues 24-287 (YDLGQLIKTE…AADAISHEWI (264 aa)) form the Protein kinase domain. The interval 324–377 (MKRLRAPEQTDPGTPSPSKDSDKTPSMATPAPSPANTPAEGAPSLPCPSPDTTG) is disordered. Low complexity predominate over residues 347 to 362 (TPSMATPAPSPANTPA). The segment covering 368–377 (LPCPSPDTTG) has biased composition (pro residues).

The protein belongs to the protein kinase superfamily. CAMK Ser/Thr protein kinase family. Interacts with calmodulin, in the presence of calcium. Ca(2+) is required as a cofactor.

Its subcellular location is the cytoplasmic vesicle membrane. Functionally, does not appear to have detectable kinase activity. In Xenopus laevis (African clawed frog), this protein is CaM kinase-like vesicle-associated protein (camkv).